A 596-amino-acid polypeptide reads, in one-letter code: UvrABC system protein C (596 aa).

A GIY-YIG domain is found at 14-91; that stretch reads DQPGCYLMKD…IKLHDPKYNV (78 aa). A UVR domain is found at 196 to 231; the sequence is EAVKKELEVKMLAAAENLEFERAKEFRDQIAHIDTV.

This sequence belongs to the UvrC family. Interacts with UvrB in an incision complex.

It localises to the cytoplasm. Functionally, the UvrABC repair system catalyzes the recognition and processing of DNA lesions. UvrC both incises the 5' and 3' sides of the lesion. The N-terminal half is responsible for the 3' incision and the C-terminal half is responsible for the 5' incision. The chain is UvrABC system protein C from Lysinibacillus sphaericus (strain C3-41).